The following is a 384-amino-acid chain: Toluene efflux pump periplasmic linker protein TtgA (384 aa).

The signal sequence occupies residues 1–22 (MQFKPAVTALVSAVALATLLSG). A lipid anchor (N-palmitoyl cysteine) is attached at Cys23. Residue Cys23 is the site of S-diacylglycerol cysteine attachment. Positions 115–155 (LAERYKQLIDEQAVSKQEYDDANAKRLQAEASLKSAQIDLR) form a coiled coil. A disordered region spans residues 362–384 (ATNVKKPAGPDQANAAKADAKAE). Over residues 368-378 (PAGPDQANAAK) the composition is skewed to low complexity.

Belongs to the membrane fusion protein (MFP) (TC 8.A.1) family.

The protein resides in the cell inner membrane. Its function is as follows. The periplasmic linker protein component of a constitutive organic solvent efflux system. Involved in export of toluene, styrene, m-xylene, propylbenzene and ethylbenzene. Also exports AMP and the antibiotics carbenicillin, nalidixic acid, chloramphenicol and tetracycline. The polypeptide is Toluene efflux pump periplasmic linker protein TtgA (ttgA) (Pseudomonas putida (strain DOT-T1E)).